A 144-amino-acid polypeptide reads, in one-letter code: Putative pre-16S rRNA nuclease (144 aa).

The protein belongs to the YqgF nuclease family.

The protein resides in the cytoplasm. In terms of biological role, could be a nuclease involved in processing of the 5'-end of pre-16S rRNA. The sequence is that of Putative pre-16S rRNA nuclease from Picosynechococcus sp. (strain ATCC 27264 / PCC 7002 / PR-6) (Agmenellum quadruplicatum).